The following is a 102-amino-acid chain: Large ribosomal subunit protein eL31 (102 aa).

The protein belongs to the eukaryotic ribosomal protein eL31 family.

The sequence is that of Large ribosomal subunit protein eL31 from Staphylothermus marinus (strain ATCC 43588 / DSM 3639 / JCM 9404 / F1).